We begin with the raw amino-acid sequence, 298 residues long: Ribonuclease HII (298 aa).

The segment at 1-57 (MIREPQKSAKAASKSSAPRARSSVAKATSTKATSSKAASSKAAPSKAGADAGAAKPR) is disordered. The segment covering 8–55 (SAKAASKSSAPRARSSVAKATSTKATSSKAASSKAAPSKAGADAGAAK) has biased composition (low complexity). Residues 85–273 (WPVAGCDEAG…VAAAWRKIEG (189 aa)) enclose the RNase H type-2 domain. A divalent metal cation contacts are provided by Asp91, Glu92, and Asp182.

The protein belongs to the RNase HII family. Mn(2+) is required as a cofactor. It depends on Mg(2+) as a cofactor.

Its subcellular location is the cytoplasm. It carries out the reaction Endonucleolytic cleavage to 5'-phosphomonoester.. In terms of biological role, endonuclease that specifically degrades the RNA of RNA-DNA hybrids. The sequence is that of Ribonuclease HII from Rhodopseudomonas palustris (strain BisB5).